Reading from the N-terminus, the 50-residue chain is Protein hunchback (50 aa).

C2H2-type zinc fingers lie at residues 1-5 (HILKH), 11-33 (IRCPECNYTCVNRSMLTSHMKSH), and 39-50 (YRCLDCNYATKY).

Belongs to the hunchback C2H2-type zinc-finger protein family.

Its subcellular location is the nucleus. Its function is as follows. Gap class segmentation protein that controls development of head structures. The sequence is that of Protein hunchback (hb) from Bradysia coprophila (Dark-winged fungus gnat).